Here is a 328-residue protein sequence, read N- to C-terminus: Ribose-phosphate pyrophosphokinase (328 aa).

Residues 39–41 and 98–99 contribute to the ATP site; these read DGE and RQ. Mg(2+)-binding residues include His-132 and Asp-172. Lys-195 is a catalytic residue. Residues Arg-197, Asp-221, and 225-229 each bind D-ribose 5-phosphate; that span reads DTGGT.

Belongs to the ribose-phosphate pyrophosphokinase family. Class I subfamily. Homohexamer. Mg(2+) serves as cofactor.

Its subcellular location is the cytoplasm. The catalysed reaction is D-ribose 5-phosphate + ATP = 5-phospho-alpha-D-ribose 1-diphosphate + AMP + H(+). It functions in the pathway metabolic intermediate biosynthesis; 5-phospho-alpha-D-ribose 1-diphosphate biosynthesis; 5-phospho-alpha-D-ribose 1-diphosphate from D-ribose 5-phosphate (route I): step 1/1. Functionally, involved in the biosynthesis of the central metabolite phospho-alpha-D-ribosyl-1-pyrophosphate (PRPP) via the transfer of pyrophosphoryl group from ATP to 1-hydroxyl of ribose-5-phosphate (Rib-5-P). The sequence is that of Ribose-phosphate pyrophosphokinase from Mycoplasma pneumoniae (strain ATCC 29342 / M129 / Subtype 1) (Mycoplasmoides pneumoniae).